The primary structure comprises 430 residues: CC-adding tRNA nucleotidyltransferase (430 aa).

33-36 (GCVR) provides a ligand contact to CTP. Mg(2+) contacts are provided by D46 and D48. Residues 108-109 (RD), N113, 150-159 (DPLRIVRAYR), and R190 contribute to the CTP site.

Belongs to the tRNA nucleotidyltransferase/poly(A) polymerase family. It depends on Mg(2+) as a cofactor.

The catalysed reaction is a tRNA precursor + 2 CTP = a tRNA with a 3' CC end + 2 diphosphate. TRNA nucleotidyltransferase involved in the synthesis of the tRNA CCA terminus. Adds the two cytidine residues to tRNA. The sequence is that of CC-adding tRNA nucleotidyltransferase from Geobacter sulfurreducens (strain ATCC 51573 / DSM 12127 / PCA).